A 533-amino-acid chain; its full sequence is CWF19-like protein 1 homolog (533 aa).

A disordered region spans residues 290–314; it reads EMGGAEDGAGNGRKRHNDGGNDGPR.

Belongs to the CWF19 family.

The chain is CWF19-like protein 1 homolog from Caenorhabditis elegans.